Consider the following 179-residue polypeptide: HTH-type transcriptional regulator AldR (179 aa).

An HTH asnC-type domain is found at 32–93 (LDEVDRRILS…DIDPVAVGLP (62 aa)). A DNA-binding region (H-T-H motif) is located at residues 51–70 (NNALADTVGIAPSTCHGRVR).

Homooctamer. Homotetramer. Tetramer of dimers. The N-terminal DNA-binding domains are swapped, forming a dimer, and four dimers are assembled into an octamer through crystal symmetry.

With respect to regulation, the DNA-binding activity of AldR is modulated by interaction of AldR with various amino acids. Alanine, tryptophan, tyrosine and aspartate completely abolish the DNA binding ability of AldR. On the other hand, glutamate and asparagine reduce AldR binding to DNA but do not completely abolish it. Binding of amino acids can lead to structural modifications and changes in oligomeric association. Activity is also inhibited by 3 small molecule inhibitors, tetrahydroquinoline carbonitrile derivative (S010-0261), levothyroxine and liothyronine, which can disrupt the AldR-DNA complex. In terms of biological role, transcriptional regulator that might play a role under hypoxic conditions. Regulates the expression of ald, which encodes L-alanine dehydrogenase. Serves as both an activator for ald expression in the presence of L-alanine and a repressor in the absence of L-alanine. Acts by binding directly to the upstream region of the ald gene. Four AldR-binding sites (O2, O1, O4 and O3) were identified upstream of the ald gene. O2, O1 and O4 are required for the induction of ald expression by alanine, while O3 is directly involved in the repression of ald expression, by occluding the access of RNA polymerase to the ald promoter. In addition to O3, both O1 and O4 are also necessary for full repression of ald expression in the absence of alanine. The protein is HTH-type transcriptional regulator AldR of Mycobacterium tuberculosis (strain ATCC 25618 / H37Rv).